Reading from the N-terminus, the 370-residue chain is Natural killer cell receptor 2B4 (370 aa).

Positions 1 to 21 are cleaved as a signal peptide; that stretch reads MLGQVVTLILLLLLKVYQGKG. 2 Ig-like domains span residues 22–127 and 131–215; these read CQGS…FVFE and PDKV…LNLT. At 22-229 the chain is on the extracellular side; the sequence is CQGSADHVVS…NAHQEFRFWP (208 aa). 8 N-linked (GlcNAc...) asparagine glycosylation sites follow: N71, N77, N89, N164, N181, N192, N200, and N213. A disulfide bond links C157 and C199. Residues 230-250 form a helical membrane-spanning segment; sequence FLVIIVILSALFLGTLACFCV. At 251–370 the chain is on the cytoplasmic side; that stretch reads WRRKRKEKQS…KELENFDVYS (120 aa). 4 consecutive short sequence motifs (ITSM) follow at residues 269–274, 295–300, 315–320, and 340–345; these read TIYEDV, TIYSMI, TLYSLI, and TIYEVI. A Phosphotyrosine modification is found at Y271. The residue at position 297 (Y297) is a Phosphotyrosine; by FYN. A Phosphotyrosine modification is found at Y317. The disordered stretch occupies residues 324–370; sequence RKSGSRKRNHSPSFNSTIYEVIGKSQPKAQNPARLSRKELENFDVYS. Y342 carries the phosphotyrosine; by FYN modification.

Interacts with CD48. Interacts (via phosphorylated ITSM 1-4) with SH2D1A (via SH2 domain); SH2D1A probably mediates association with FYN. Interacts (via phosphorylated ITSM 3) with PTPN11/SHP-2, INPP5D/SHIP1, PTPN6/SHP-1 and CSK; binding of SH2D1A/SAP prevents association with PTPN11, PTPN6 and CSK; conflictingly a similar association has been described for phosphorylated ITSM 1 also including GRB2 and PLCG1. Interacts weakly (via phosphorylated ITSM 2) with PTPN11/SHP-2 and CSK. Interacts with SH2D1B. Interacts with PIK3R1; PI3K recruits SH2D1A. Interacts with MHC class I proteins; the interaction is proposed to prevent self-killing of NK cells. N-linked glycosylation is essential for the binding to its ligand CD48. Also O-glycosylated, in contrast, O-linked sialylation has a negative impact on ligand binding. In terms of processing, phosphorylated by FYN and CSK on tyrosine residues following activation. Coligation with inhibitory receptors such as KIR2DL1 inhibits phosphorylation upon contact of NK cells with sensitive target cells. Expressed in spleen, PBL, followed by lung, liver, testis and small intestine. Expressed in all natural killer (NK) cells, monocytes and basophils, TCR-gamma/delta+ T-cells, monocytes, basophils, and on a subset of CD8(+) T-cells.

The protein resides in the membrane. It is found in the cell membrane. Its subcellular location is the membrane raft. Heterophilic receptor of the signaling lymphocytic activation molecule (SLAM) family; its ligand is CD48. SLAM receptors triggered by homo- or heterotypic cell-cell interactions are modulating the activation and differentiation of a wide variety of immune cells and thus are involved in the regulation and interconnection of both innate and adaptive immune response. Activities are controlled by presence or absence of small cytoplasmic adapter proteins, SH2D1A/SAP and/or SH2D1B/EAT-2. Acts as activating natural killer (NK) cell receptor. Activating function implicates association with SH2D1A and FYN. Downstreaming signaling involves predominantly VAV1, and, to a lesser degree, INPP5D/SHIP1 and CBL. Signal attenuation in the absence of SH2D1A is proposed to be dependent on INPP5D and to a lesser extent PTPN6/SHP-1 and PTPN11/SHP-2. Stimulates NK cell cytotoxicity, production of IFN-gamma and granule exocytosis. Optimal expansion and activation of NK cells seems to be dependent on the engagement of CD244 with CD48 expressed on neighboring NK cells. Acts as costimulator in NK activation by enhancing signals by other NK receptors such as NCR3 and NCR1. At early stages of NK cell differentiation may function as an inhibitory receptor possibly ensuring the self-tolerance of developing NK cells. Involved in the regulation of CD8(+) T-cell proliferation; expression on activated T-cells and binding to CD48 provides costimulatory-like function for neighboring T-cells. Inhibits inflammatory responses in dendritic cells (DCs). This chain is Natural killer cell receptor 2B4 (CD244), found in Homo sapiens (Human).